The following is a 228-amino-acid chain: L-ribulose-5-phosphate 4-epimerase UlaF (228 aa).

Substrate is bound by residues 26 to 27 (GN), 43 to 44 (SG), and 72 to 73 (SS). Residues Asp-74, His-93, and His-95 each coordinate Zn(2+). Residue Asp-118 is the Proton donor/acceptor of the active site. Residue His-167 participates in Zn(2+) binding. Tyr-225 functions as the Proton donor/acceptor in the catalytic mechanism.

This sequence belongs to the aldolase class II family. AraD/FucA subfamily. Requires Zn(2+) as cofactor.

It carries out the reaction L-ribulose 5-phosphate = D-xylulose 5-phosphate. Its pathway is cofactor degradation; L-ascorbate degradation; D-xylulose 5-phosphate from L-ascorbate: step 4/4. Catalyzes the isomerization of L-ribulose 5-phosphate to D-xylulose 5-phosphate. Is involved in the anaerobic L-ascorbate utilization. This is L-ribulose-5-phosphate 4-epimerase UlaF from Escherichia coli (strain SMS-3-5 / SECEC).